Reading from the N-terminus, the 832-residue chain is DEAD-box ATP-dependent RNA helicase 13 (832 aa).

A compositionally biased stretch (pro residues) spans 1–12; it reads MAAAPPPPPPPQ. Disordered regions lie at residues 1–59 and 91–173; these read MAAA…TMVE and VEDL…DDNV. The span at 29-42 shows a compositional bias: basic residues; it reads RKGKKSRGAKKPRR. Positions 43–55 are enriched in low complexity; that stretch reads AAAAAAASTSSAG. Over residues 105-114 the composition is skewed to basic residues; sequence QKKKKRKKRK. A compositionally biased stretch (acidic residues) spans 128 to 137; the sequence is LVVECEEEGE. Positions 141–155 are enriched in basic residues; that stretch reads KRVKKKRRSRKKRKV. Over residues 156–167 the composition is skewed to basic and acidic residues; sequence KEMEEKMESKED. The Q motif signature appears at 198–226; sequence YAWRELRLHPLLITAVRRLGFKEPTPIQK. One can recognise a Helicase ATP-binding domain in the interval 230–447; it reads PAAAHQGKDV…KLKRGLVTAK (218 aa). 243-250 is an ATP binding site; it reads AETGSGKT. Residues 371–374 carry the DEAD box motif; the sequence is DEAD. Residues 484-645 enclose the Helicase C-terminal domain; that stretch reads KLEESFIECS…QFPVDHAYMP (162 aa). Residues 800 to 832 are disordered; it reads RRLAENWRRKKQKEKKSTREQKRKEKRIAKERD. Positions 814 to 832 are enriched in basic and acidic residues; it reads KKSTREQKRKEKRIAKERD.

The protein belongs to the DEAD box helicase family. DDX24/MAK5 subfamily.

It catalyses the reaction ATP + H2O = ADP + phosphate + H(+). This Oryza sativa subsp. japonica (Rice) protein is DEAD-box ATP-dependent RNA helicase 13.